A 345-amino-acid polypeptide reads, in one-letter code: Aspartate--ammonia ligase (345 aa).

It belongs to the class-II aminoacyl-tRNA synthetase family. AsnA subfamily.

The protein resides in the cytoplasm. The catalysed reaction is L-aspartate + NH4(+) + ATP = L-asparagine + AMP + diphosphate + H(+). It participates in amino-acid biosynthesis; L-asparagine biosynthesis; L-asparagine from L-aspartate (ammonia route): step 1/1. This chain is Aspartate--ammonia ligase, found in Bacteroides thetaiotaomicron (strain ATCC 29148 / DSM 2079 / JCM 5827 / CCUG 10774 / NCTC 10582 / VPI-5482 / E50).